Reading from the N-terminus, the 124-residue chain is Flagellar transcriptional regulator FlhD (124 aa).

The protein belongs to the FlhD family. Homodimer; disulfide-linked. Forms a heterohexamer composed of two FlhC and four FlhD subunits. Each FlhC binds a FlhD dimer, forming a heterotrimer, and a hexamer assembles by dimerization of two heterotrimers.

The protein localises to the cytoplasm. Functions in complex with FlhC as a master transcriptional regulator that regulates transcription of several flagellar and non-flagellar operons by binding to their promoter region. Activates expression of class 2 flagellar genes, including fliA, which is a flagellum-specific sigma factor that turns on the class 3 genes. Also regulates genes whose products function in a variety of physiological pathways. This Pectobacterium carotovorum (Erwinia carotovora) protein is Flagellar transcriptional regulator FlhD.